The chain runs to 548 residues: DNA ligase (548 aa).

ATP is bound at residue Glu244. Lys246 (N6-AMP-lysine intermediate) is an active-site residue. Residues Arg251, Arg266, Glu295, Phe334, Arg405, and Lys411 each contribute to the ATP site.

Belongs to the ATP-dependent DNA ligase family. Requires Mg(2+) as cofactor.

It carries out the reaction ATP + (deoxyribonucleotide)n-3'-hydroxyl + 5'-phospho-(deoxyribonucleotide)m = (deoxyribonucleotide)n+m + AMP + diphosphate.. In terms of biological role, DNA ligase that seals nicks in double-stranded DNA during DNA replication, DNA recombination and DNA repair. This is DNA ligase from Methanoculleus marisnigri (strain ATCC 35101 / DSM 1498 / JR1).